A 185-amino-acid chain; its full sequence is Nucleoside triphosphate pyrophosphatase (185 aa).

The Proton acceptor role is filled by aspartate 70.

The protein belongs to the Maf family. It depends on a divalent metal cation as a cofactor.

Its subcellular location is the cytoplasm. It catalyses the reaction a ribonucleoside 5'-triphosphate + H2O = a ribonucleoside 5'-phosphate + diphosphate + H(+). It carries out the reaction a 2'-deoxyribonucleoside 5'-triphosphate + H2O = a 2'-deoxyribonucleoside 5'-phosphate + diphosphate + H(+). Its function is as follows. Nucleoside triphosphate pyrophosphatase. May have a dual role in cell division arrest and in preventing the incorporation of modified nucleotides into cellular nucleic acids. In Nitratiruptor sp. (strain SB155-2), this protein is Nucleoside triphosphate pyrophosphatase.